Here is a 197-residue protein sequence, read N- to C-terminus: Isopentenyl-diphosphate Delta-isomerase (197 aa).

The Mn(2+) site is built by histidine 41 and histidine 48. In terms of domain architecture, Nudix hydrolase spans 46–183 (QLHRAFSVFL…AWFMTVLDAA (138 aa)). The active site involves cysteine 83. Histidine 85 contacts Mn(2+). Glutamate 103 contributes to the Mg(2+) binding site. Glutamate 130 and glutamate 132 together coordinate Mn(2+). The active site involves glutamate 132.

It belongs to the IPP isomerase type 1 family. It depends on Mg(2+) as a cofactor. The cofactor is Mn(2+).

The protein resides in the cytoplasm. It catalyses the reaction isopentenyl diphosphate = dimethylallyl diphosphate. Its pathway is isoprenoid biosynthesis; dimethylallyl diphosphate biosynthesis; dimethylallyl diphosphate from isopentenyl diphosphate: step 1/1. Functionally, catalyzes the 1,3-allylic rearrangement of the homoallylic substrate isopentenyl (IPP) to its highly electrophilic allylic isomer, dimethylallyl diphosphate (DMAPP). This chain is Isopentenyl-diphosphate Delta-isomerase, found in Streptomyces griseus subsp. griseus (strain JCM 4626 / CBS 651.72 / NBRC 13350 / KCC S-0626 / ISP 5235).